Consider the following 142-residue polypeptide: Large-conductance mechanosensitive channel (142 aa).

3 helical membrane passes run 14–34, 38–58, and 82–102; these read VMDLAVGVIIGAAFSKIVDSV, LVMPVVGAITGGGFDFSNYFL, and GNFITVLINFLILAWIIFLLI.

The protein belongs to the MscL family. In terms of assembly, homopentamer.

The protein resides in the cell inner membrane. In terms of biological role, channel that opens in response to stretch forces in the membrane lipid bilayer. May participate in the regulation of osmotic pressure changes within the cell. The chain is Large-conductance mechanosensitive channel from Rhizobium meliloti (strain 1021) (Ensifer meliloti).